A 62-amino-acid chain; its full sequence is Photosystem II reaction center protein Z (62 aa).

Transmembrane regions (helical) follow at residues T8–A28 and F41–V61.

It belongs to the PsbZ family. As to quaternary structure, PSII is composed of 1 copy each of membrane proteins PsbA, PsbB, PsbC, PsbD, PsbE, PsbF, PsbH, PsbI, PsbJ, PsbK, PsbL, PsbM, PsbT, PsbY, PsbZ, Psb30/Ycf12, at least 3 peripheral proteins of the oxygen-evolving complex and a large number of cofactors. It forms dimeric complexes.

The protein localises to the plastid. The protein resides in the chloroplast thylakoid membrane. In terms of biological role, may control the interaction of photosystem II (PSII) cores with the light-harvesting antenna, regulates electron flow through the 2 photosystem reaction centers. PSII is a light-driven water plastoquinone oxidoreductase, using light energy to abstract electrons from H(2)O, generating a proton gradient subsequently used for ATP formation. The chain is Photosystem II reaction center protein Z from Mesostigma viride (Green alga).